A 172-amino-acid polypeptide reads, in one-letter code: Co-chaperone protein HscB homolog (172 aa).

The J domain maps to 2–74 (NYFELFGLVE…LRRAEYLLSL (73 aa)).

The protein belongs to the HscB family. Interacts with HscA and stimulates its ATPase activity.

In terms of biological role, co-chaperone involved in the maturation of iron-sulfur cluster-containing proteins. Seems to help targeting proteins to be folded toward HscA. In Aeromonas hydrophila subsp. hydrophila (strain ATCC 7966 / DSM 30187 / BCRC 13018 / CCUG 14551 / JCM 1027 / KCTC 2358 / NCIMB 9240 / NCTC 8049), this protein is Co-chaperone protein HscB homolog.